Reading from the N-terminus, the 285-residue chain is Zinc transporter ZupT (285 aa).

The next 3 helical transmembrane spans lie at 13 to 33 (AFLL…IAFF), 41 to 61 (FLCV…MIEM), and 80 to 100 (WITV…DKFV). Residues Asn153 and Glu156 each coordinate Fe(2+). Glu156 contacts Zn(2+). A helical membrane pass occupies residues 160–180 (TFVSALEGASLAIPITIAIAI). His181 contacts Zn(2+). 3 residues coordinate Fe(2+): Asn182, Glu185, and Glu214. Zn(2+) is bound at residue Glu185. 3 consecutive transmembrane segments (helical) span residues 204-224 (FLYS…GYTL), 228-248 (IFND…MVFI), and 265-285 (LAIY…LLFI).

This sequence belongs to the ZIP transporter (TC 2.A.5) family. ZupT subfamily.

It localises to the cell membrane. It catalyses the reaction Zn(2+)(in) = Zn(2+)(out). Functionally, mediates zinc uptake. May also transport other divalent cations. This Clostridium perfringens (strain 13 / Type A) protein is Zinc transporter ZupT.